The sequence spans 399 residues: Semaphorin-like protein 139 (399 aa).

The N-terminal stretch at Met-1–Cys-14 is a signal peptide. Residues Ile-15–Met-399 form the Sema domain.

Belongs to the semaphorin family. Interacts with host VESPR.

Its subcellular location is the secreted. Functionally, acts as a semaphorin-like protein and binds to host plexin C1 receptor. May alter the movement of plexin C1-expressing cells including dendritic cells, monocytes, or granulocytes in the proximity of infected cells. May also regulate host cell cytoskeleton of neighboring cells to improve viral infection. The chain is Semaphorin-like protein 139 (EVM139) from Ectromelia virus (strain Moscow) (ECTV).